The following is a 369-amino-acid chain: DNA replication and repair protein RecF (369 aa).

30 to 37 (GENAQGKT) lines the ATP pocket.

The protein belongs to the RecF family.

The protein resides in the cytoplasm. In terms of biological role, the RecF protein is involved in DNA metabolism; it is required for DNA replication and normal SOS inducibility. RecF binds preferentially to single-stranded, linear DNA. It also seems to bind ATP. This chain is DNA replication and repair protein RecF, found in Oceanobacillus iheyensis (strain DSM 14371 / CIP 107618 / JCM 11309 / KCTC 3954 / HTE831).